The primary structure comprises 72 residues: DNA-directed RNA polymerase subunit omega (72 aa).

It belongs to the RNA polymerase subunit omega family. The RNAP catalytic core consists of 2 alpha, 1 beta, 1 beta' and 1 omega subunit. When a sigma factor is associated with the core the holoenzyme is formed, which can initiate transcription.

The enzyme catalyses RNA(n) + a ribonucleoside 5'-triphosphate = RNA(n+1) + diphosphate. Its function is as follows. Promotes RNA polymerase assembly. Latches the N- and C-terminal regions of the beta' subunit thereby facilitating its interaction with the beta and alpha subunits. The sequence is that of DNA-directed RNA polymerase subunit omega from Clostridium botulinum (strain Langeland / NCTC 10281 / Type F).